A 514-amino-acid polypeptide reads, in one-letter code: Maltose/maltodextrin transport system permease protein MalF (514 aa).

Topologically, residues 1-16 (MDVIKKKHWWQSDQLK) are cytoplasmic. The helical transmembrane segment at 17 to 36 (WSVIGLLGLLVGYLVVLMYV) threads the bilayer. Topologically, residues 37–39 (QGE) are periplasmic. Residues 40-57 (YLFAIMTLILSSAGLYIF) form a helical membrane-spanning segment. The Cytoplasmic portion of the chain corresponds to 58–69 (ANRKTYAWRYVY). The chain crosses the membrane as a helical span at residues 70–92 (PGLAGMGLFVLFPLVCTIAIAFT). At 93–283 (NYSSTNQLTF…QKPFFAIFVW (191 aa)) the chain is on the periplasmic side. Residues 281-505 (FVWTVVFSVL…LLVGALAIVN (225 aa)) form the ABC transmembrane type-1 domain. The chain crosses the membrane as a helical span at residues 284 to 306 (TVVFSVLTVVLTVAVGMVLACLV). At 307-318 (QWEALKGKAIYR) the chain is on the cytoplasmic side. Residues 319 to 341 (VLLILPYAVPSFISILIFKGLFN) form a helical membrane-spanning segment. Topologically, residues 342-369 (QSFGEINMMLSALFGIKPAWFSDPNTAR) are periplasmic. The helical transmembrane segment at 370–392 (AMVIIVNTWLGYPYMMILCMGLL) threads the bilayer. Over 393-412 (KAIPDDLYEASAMDGAGPFQ) the chain is Cytoplasmic. The helical transmembrane segment at 413 to 435 (NFFKITLPLLIKPLTPLMIASFA) threads the bilayer. The Periplasmic segment spans residues 436–483 (FNFNNFVLIQLLTNGGPDRLGTTTPAGYTDLLVSYTYRIAFEGGGGQD). A helical membrane pass occupies residues 484–506 (FGLAAAIATLIFLLVGALAIVNL). Over 507-514 (KATRMKFD) the chain is Cytoplasmic.

The protein belongs to the binding-protein-dependent transport system permease family. MalFG subfamily. The complex is composed of two ATP-binding proteins (MalK), two transmembrane proteins (MalG and MalF) and a solute-binding protein (MalE).

It is found in the cell inner membrane. Functionally, part of the ABC transporter complex MalEFGK involved in maltose/maltodextrin import. Probably responsible for the translocation of the substrate across the membrane. The polypeptide is Maltose/maltodextrin transport system permease protein MalF (malF) (Salmonella typhi).